A 543-amino-acid chain; its full sequence is ADIPOR-like receptor IZH3 (543 aa).

The Lumenal portion of the chain corresponds to 1–259 (MMDSSSKSLT…NWYGWHNETS (259 aa)). Asparagine 45, asparagine 123, asparagine 153, and asparagine 256 each carry an N-linked (GlcNAc...) asparagine glycan. A helical transmembrane segment spans residues 260-280 (NIWSHLLGAIYIIYLAIYDFP). At 281–295 (QSEVWRNSQVPPQAR) the chain is on the cytoplasmic side. A helical membrane pass occupies residues 296 to 316 (WIVFMFLAAALKCMLSSVFWH). The Lumenal portion of the chain corresponds to 317–330 (TFNGTSFLKLRSKF). Asparagine 319 carries N-linked (GlcNAc...) asparagine glycosylation. A helical transmembrane segment spans residues 331–353 (ACVDYSGITILITASILTTEFVT). Residues 354–357 (MYSC) lie on the Cytoplasmic side of the membrane. Residues 358-378 (YWAMYTYMSISLALGVFGVFM) traverse the membrane as a helical segment. The Lumenal segment spans residues 379–395 (NWSPRFDRPEARPLRIR). The helical transmembrane segment at 396–416 (FFILLATMGVLSFLHLIFLTD) threads the bilayer. Residues 417 to 425 (LHYAATLFS) lie on the Cytoplasmic side of the membrane. The chain crosses the membrane as a helical span at residues 426–446 (PVTYKSVVWYLVGVVFYGSFI). Topologically, residues 447–505 (PERFRSDVQVDKTIPTNYELSTDLEIITKQREIHFREVPTAHSKCSSCPSHAKSFKSLW) are lumenal. Residues 506 to 526 (WVDYFGCSHTFWHFFVVLGVI) traverse the membrane as a helical segment. The Cytoplasmic portion of the chain corresponds to 527 to 543 (GHYRAILDMFAKRWILS).

This sequence belongs to the ADIPOR family.

The protein resides in the endoplasmic reticulum membrane. In terms of biological role, ADIPOR-like receptor involved in zinc metabolism either by altering membrane sterol content or by directly altering cellular zinc levels. This Saccharomyces cerevisiae (strain ATCC 204508 / S288c) (Baker's yeast) protein is ADIPOR-like receptor IZH3 (IZH3).